The sequence spans 619 residues: MEFPGGNDNYLTITGPSHPFLSGAETFHTPSLGDEEFEIPPISLDSDPSLAVSDVVAHFDDLADPSSSQDGSFSAQYGVQTLDMPVGMTHGLMEQGGGLLSGGLTMDLDHSIGTQYSANPPVTIDVPMTDMTSGLMGHSQLTTIDQSELSSQLGLSLGGGTILPPAQSPEDRLSTTPSPTNSLHEDGVDDFRRQLPAQKTVVVETGKKQKAPKKRKKKDPNEPQKPVSAYALFFRDTQAAIKGQNPNATFGEVSKIVASMWDSLGEEQKQVYKRKTEAAKKEYLKALAAYKDNQECQATVETVELDPVPQSQTPSPPPVTTADPASPAPASTESPALSPCIVVNSTLSSYVANQAFSGPGGQPNITKLIITKQMLPSSITMSQGGMVTVIPATVVTSRGLQLGQTSTATIQPSQQAQIATRSVLQAAAAAAASMQLPPPRLQPPPLQQMPQPPTQQQVTILQQPPPLQAMQQPPPQKVRINLQQQPPPLQSKIVPPPALKMQATVLPPTVESSPEQPMNSSPEAHTVEATSPETICEMIADVVPEVESPSQMDVELVSGSPVTLSPQPRCVRSGCENPPVISKDWDNEYCSNECVVKHCRDVFLAWVASRNPNSVVLVK.

Disordered regions lie at residues Leu-155–Val-227, Glu-304–Pro-335, and Leu-436–Val-458. At Thr-176 the chain carries Phosphothreonine. 2 positions are modified to phosphoserine: Ser-178 and Ser-182. The segment covering Leu-183 to Arg-193 has biased composition (basic and acidic residues). The span at Lys-208–Lys-218 shows a compositional bias: basic residues. A Nuclear localization signal motif is present at residues Lys-213 to Lys-218. Residues Pro-223–Lys-291 constitute a DNA-binding region (HMG box). Thr-313 carries the phosphothreonine modification. Ser-315 carries the phosphoserine modification. Residues Thr-320–Pro-335 are compositionally biased toward low complexity. A compositionally biased stretch (pro residues) spans Leu-436 to Pro-453. Asymmetric dimethylarginine is present on Arg-479. Residues Ser-531, Ser-548, Ser-550, Ser-558, Ser-560, and Ser-565 each carry the phosphoserine modification.

As to quaternary structure, component of the PNUTS-PP1 phosphatase complex, composed of PPP1R10/PNUTS, TOX4, WDR82 and PPP1CA or PPP1CB or PPP1CC. Interacts with PPP1R10/PNUTS. Interacts with FOXO1 and CREB1 (increased by cAMP); FOXO1 and CREB1 are required for full induction of TOX4-dependent activity and the interactions are inhibited by insulin.

The protein resides in the nucleus. The protein localises to the chromosome. Its activity is regulated as follows. In liver, recruited to target gene promoters following treatment with dexamethasone and cAMP. Binding is decreased in presence of insulin. Transcription factor that modulates cell fate reprogramming from the somatic state to the pluripotent and neuronal fate. In liver, controls the expression of hormone-regulated gluconeogenic genes such as G6PC1 and PCK1. This regulation is independent of the insulin receptor activation. Also acts as a regulatory component of protein phosphatase 1 (PP1) complexes. Component of the PNUTS-PP1 protein phosphatase complex, a PP1 complex that regulates RNA polymerase II transcription pause-release. PNUTS-PP1 also plays a role in the control of chromatin structure and cell cycle progression during the transition from mitosis into interphase. The chain is TOX high mobility group box family member 4 (Tox4) from Rattus norvegicus (Rat).